Reading from the N-terminus, the 468-residue chain is Argininosuccinate lyase (468 aa).

Positions 33, 121, and 166 each coordinate 2-(N(omega)-L-arginino)succinate. Catalysis depends on His167, which acts as the Proton acceptor. Ser288 serves as the catalytic Proton donor. Residues Asn296, Tyr328, Gln333, and Lys336 each coordinate 2-(N(omega)-L-arginino)succinate.

This sequence belongs to the lyase 1 family. Argininosuccinate lyase subfamily. As to quaternary structure, homotetramer.

The catalysed reaction is 2-(N(omega)-L-arginino)succinate = fumarate + L-arginine. The protein operates within amino-acid biosynthesis; L-arginine biosynthesis; L-arginine from L-ornithine and carbamoyl phosphate: step 3/3. The chain is Argininosuccinate lyase (ARG4) from Candida albicans (Yeast).